Consider the following 421-residue polypeptide: Testin (421 aa).

The region spanning 92–199 (MILTNPVAAK…GDVKLPRDMN (108 aa)) is the PET domain. Disordered regions lie at residues 133 to 164 (EKQPVAGSEGAQYRKKQLAKQLPAHDQDPSKC) and 193 to 213 (KLPRDMNTQGPNRMYIPGGDR). Over residues 155 to 164 (PAHDQDPSKC) the composition is skewed to basic and acidic residues. 3 consecutive LIM zinc-binding domains span residues 234-297 (YSCY…CDSE), 299-359 (PRCA…NHAV), and 362-421 (QGCH…KMMS).

It belongs to the prickle / espinas / testin family. As to quaternary structure, interacts via LIM domain 1 with ZYX. Interacts (via LIM domain 3) with ENAH and VASP. Interacts with ALKBH4, talin, actin, alpha-actinin, GRIP1 and PXN. Interacts (via LIM domain 2) with ACTL7A (via N-terminus). Heterodimer with ACTL7A; the heterodimer interacts with ENAH to form a heterotrimer.

It is found in the cytoplasm. The protein resides in the cell junction. Its subcellular location is the focal adhesion. Functionally, scaffold protein that may play a role in cell adhesion, cell spreading and in the reorganization of the actin cytoskeleton. Plays a role in the regulation of cell proliferation. May act as a tumor suppressor. This Muntiacus muntjak (Barking deer) protein is Testin (TES).